Reading from the N-terminus, the 206-residue chain is Uridine kinase (206 aa).

11 to 18 contributes to the ATP binding site; sequence GGSGSGKT.

It belongs to the uridine kinase family.

It localises to the cytoplasm. The catalysed reaction is uridine + ATP = UMP + ADP + H(+). The enzyme catalyses cytidine + ATP = CMP + ADP + H(+). The protein operates within pyrimidine metabolism; CTP biosynthesis via salvage pathway; CTP from cytidine: step 1/3. It functions in the pathway pyrimidine metabolism; UMP biosynthesis via salvage pathway; UMP from uridine: step 1/1. The polypeptide is Uridine kinase (Macrococcus caseolyticus (strain JCSC5402) (Macrococcoides caseolyticum)).